The chain runs to 418 residues: Glucose-1-phosphate adenylyltransferase (418 aa).

Alpha-D-glucose 1-phosphate-binding positions include tyrosine 104, glycine 169, 184–185, and serine 202; that span reads EK.

It belongs to the bacterial/plant glucose-1-phosphate adenylyltransferase family. Homotetramer.

It catalyses the reaction alpha-D-glucose 1-phosphate + ATP + H(+) = ADP-alpha-D-glucose + diphosphate. The protein operates within glycan biosynthesis; glycogen biosynthesis. Functionally, involved in the biosynthesis of ADP-glucose, a building block required for the elongation reactions to produce glycogen. Catalyzes the reaction between ATP and alpha-D-glucose 1-phosphate (G1P) to produce pyrophosphate and ADP-Glc. The protein is Glucose-1-phosphate adenylyltransferase of Jannaschia sp. (strain CCS1).